Reading from the N-terminus, the 353-residue chain is Methionine import ATP-binding protein MetN (353 aa).

Residues 7–249 (LENIDVTFKQ…PKEELSRQFV (243 aa)) form the ABC transporter domain. 41–48 (GYSGAGKS) contacts ATP.

This sequence belongs to the ABC transporter superfamily. Methionine importer (TC 3.A.1.24) family. In terms of assembly, the complex is composed of two ATP-binding proteins (MetN), two transmembrane proteins (MetI) and a solute-binding protein (MetQ).

Its subcellular location is the cell membrane. It carries out the reaction L-methionine(out) + ATP + H2O = L-methionine(in) + ADP + phosphate + H(+). The enzyme catalyses D-methionine(out) + ATP + H2O = D-methionine(in) + ADP + phosphate + H(+). Its function is as follows. Part of the ABC transporter complex MetNIQ involved in methionine import. Responsible for energy coupling to the transport system. This Ligilactobacillus salivarius (strain UCC118) (Lactobacillus salivarius) protein is Methionine import ATP-binding protein MetN.